We begin with the raw amino-acid sequence, 106 residues long: ER membrane protein complex subunit 5 (106 aa).

Residues 1–12 are Cytoplasmic-facing; the sequence is MESSTINAKKIS. The helical transmembrane segment at 13-33 threads the bilayer; it reads VLLTLFSIIGYTAYSAHESIL. The Lumenal segment spans residues 34–46; the sequence is EIRQDGKLPLDIK. The helical transmembrane segment at 47-67 threads the bilayer; the sequence is CEVILVTLLFTFTTVIIASPL. The Cytoplasmic segment spans residues 68-106; it reads RSIQLNKWSHQRSDLAFLNSRTNFLRIKELKEKIEKVKN.

The protein belongs to the membrane magnesium transporter (TC 1.A.67) family. In terms of assembly, component of the ER membrane protein complex (EMC).

Its subcellular location is the endoplasmic reticulum membrane. Functionally, the EMC seems to be required for efficient folding of proteins in the endoplasmic reticulum (ER). In Schizosaccharomyces pombe (strain 972 / ATCC 24843) (Fission yeast), this protein is ER membrane protein complex subunit 5 (emc5).